The primary structure comprises 168 residues: Desumoylating isopeptidase 1 (168 aa).

Residues 7–149 (YPVKLYVYDL…FGQALRPFLD (143 aa)) enclose the PPPDE domain. The active site involves His-38. The short motif at 83–91 (IFLEYLSSL) is the Nuclear export signal 1 element. Cys-108 is a catalytic residue. Residues 139-153 (PFGQALRPFLDSIQI) carry the Nuclear export signal 2 motif.

The protein belongs to the DeSI family. Homodimer. Interacts with UBQLN4; leading to the export of UBQLN4 from the nucleus.

It localises to the cytoplasm. The protein localises to the nucleus. It carries out the reaction S-hexadecanoyl-L-cysteinyl-[protein] + H2O = L-cysteinyl-[protein] + hexadecanoate + H(+). Functionally, protease which deconjugates SUMO1, SUMO2 and SUMO3 from some substrate proteins. Has isopeptidase but not SUMO-processing activity. Desumoylates ZBTB46. Collaborates with UBQLN4 in the export of ubiquitinated proteins from the nucleus to the cytoplasm. Exhibits palmitoyl protein thioesterase (S-depalmitoylation) activity towards synthetic substrates 4-methylumbelliferyl-6-S-palmitoyl-beta-D-glucopyranoside and S-depalmitoylation probe 5 (DPP-5). The polypeptide is Desumoylating isopeptidase 1 (Desi1) (Rattus norvegicus (Rat)).